Consider the following 296-residue polypeptide: 4-hydroxy-tetrahydrodipicolinate synthase (296 aa).

Threonine 50 contributes to the pyruvate binding site. Tyrosine 138 functions as the Proton donor/acceptor in the catalytic mechanism. Lysine 166 serves as the catalytic Schiff-base intermediate with substrate. Position 208 (isoleucine 208) interacts with pyruvate.

Belongs to the DapA family. As to quaternary structure, homotetramer; dimer of dimers.

Its subcellular location is the cytoplasm. It catalyses the reaction L-aspartate 4-semialdehyde + pyruvate = (2S,4S)-4-hydroxy-2,3,4,5-tetrahydrodipicolinate + H2O + H(+). Its pathway is amino-acid biosynthesis; L-lysine biosynthesis via DAP pathway; (S)-tetrahydrodipicolinate from L-aspartate: step 3/4. Catalyzes the condensation of (S)-aspartate-beta-semialdehyde [(S)-ASA] and pyruvate to 4-hydroxy-tetrahydrodipicolinate (HTPA). In Thiobacillus denitrificans (strain ATCC 25259 / T1), this protein is 4-hydroxy-tetrahydrodipicolinate synthase.